Consider the following 262-residue polypeptide: Acyl-[acyl-carrier-protein]--UDP-N-acetylglucosamine O-acyltransferase (262 aa).

The protein belongs to the transferase hexapeptide repeat family. LpxA subfamily. As to quaternary structure, homotrimer.

The protein localises to the cytoplasm. The enzyme catalyses a (3R)-hydroxyacyl-[ACP] + UDP-N-acetyl-alpha-D-glucosamine = a UDP-3-O-[(3R)-3-hydroxyacyl]-N-acetyl-alpha-D-glucosamine + holo-[ACP]. It participates in glycolipid biosynthesis; lipid IV(A) biosynthesis; lipid IV(A) from (3R)-3-hydroxytetradecanoyl-[acyl-carrier-protein] and UDP-N-acetyl-alpha-D-glucosamine: step 1/6. In terms of biological role, involved in the biosynthesis of lipid A, a phosphorylated glycolipid that anchors the lipopolysaccharide to the outer membrane of the cell. This Yersinia enterocolitica serotype O:8 / biotype 1B (strain NCTC 13174 / 8081) protein is Acyl-[acyl-carrier-protein]--UDP-N-acetylglucosamine O-acyltransferase.